The following is a 336-amino-acid chain: Aromatic prenyltransferase (336 aa).

It belongs to the aromatic prenyltransferase family.

Its function is as follows. Prenyltransferase that attaches isoprenoid moieties to carbon atoms of aromatic substrates in an enzyme-catalyzed Friedel-Crafts reaction. Shows specificity for dimethylallyl diphosphate (DMAPP) and does not accept geranyl diphosphate (GPP) or isopentenyl diphosphate (IPP). Prenylates the artificial substrate 2,7-dihydroxynaphthalene (2,7-DHN), as well as dihydrophenazine-1-carboxylic acid at a lower level. Only traces of products are detected with aspulvinone E, flaviolin, or 4-hydroxybenzoic acid as substrates; and no product is formed with L-tryptophan, L-tyrosine, or 4-hydroxyphenylpyruvate. Ptf seems no to be involved in the prenylation reaction in the biosynthesis of aspulvinone H and J and the physiological function of ptf remains unknown. This Aspergillus terreus (strain NIH 2624 / FGSC A1156) protein is Aromatic prenyltransferase.